Here is a 115-residue protein sequence, read N- to C-terminus: DNA-binding protein PH1060 (115 aa).

It belongs to the PDCD5 family.

This chain is DNA-binding protein PH1060, found in Pyrococcus horikoshii (strain ATCC 700860 / DSM 12428 / JCM 9974 / NBRC 100139 / OT-3).